Here is a 149-residue protein sequence, read N- to C-terminus: Large ribosomal subunit protein bL9 (149 aa).

It belongs to the bacterial ribosomal protein bL9 family.

Functionally, binds to the 23S rRNA. In Helicobacter pylori (strain P12), this protein is Large ribosomal subunit protein bL9.